The sequence spans 228 residues: ATP-dependent dethiobiotin synthetase BioD (228 aa).

Residue 13-18 (DIGKTF) participates in ATP binding. A Mg(2+)-binding site is contributed by T17. Residue K38 is part of the active site. S42 serves as a coordination point for substrate. ATP-binding positions include D55, 116-119 (EGSG), 179-180 (NK), and 208-210 (PKI). Residues D55 and E116 each coordinate Mg(2+).

Belongs to the dethiobiotin synthetase family. Homodimer. Mg(2+) is required as a cofactor.

The protein localises to the cytoplasm. The catalysed reaction is (7R,8S)-7,8-diammoniononanoate + CO2 + ATP = (4R,5S)-dethiobiotin + ADP + phosphate + 3 H(+). Its pathway is cofactor biosynthesis; biotin biosynthesis; biotin from 7,8-diaminononanoate: step 1/2. Functionally, catalyzes a mechanistically unusual reaction, the ATP-dependent insertion of CO2 between the N7 and N8 nitrogen atoms of 7,8-diaminopelargonic acid (DAPA, also called 7,8-diammoniononanoate) to form a ureido ring. The sequence is that of ATP-dependent dethiobiotin synthetase BioD from Clostridium perfringens (strain ATCC 13124 / DSM 756 / JCM 1290 / NCIMB 6125 / NCTC 8237 / Type A).